Here is a 239-residue protein sequence, read N- to C-terminus: Endonuclease V (239 aa).

D48 and D116 together coordinate Mg(2+).

Belongs to the endonuclease V family. Mg(2+) is required as a cofactor.

The protein resides in the cytoplasm. It carries out the reaction Endonucleolytic cleavage at apurinic or apyrimidinic sites to products with a 5'-phosphate.. Its function is as follows. DNA repair enzyme involved in the repair of deaminated bases. Selectively cleaves double-stranded DNA at the second phosphodiester bond 3' to a deoxyinosine leaving behind the intact lesion on the nicked DNA. This Xanthomonas oryzae pv. oryzae (strain MAFF 311018) protein is Endonuclease V.